Consider the following 364-residue polypeptide: tRNA 2-selenouridine synthase (364 aa).

In terms of domain architecture, Rhodanese spans 14–137; the sequence is LLADTPLIDV…LRQTAIQATW (124 aa). Cysteine 97 functions as the S-selanylcysteine intermediate in the catalytic mechanism.

Belongs to the SelU family. In terms of assembly, monomer.

The enzyme catalyses 5-methylaminomethyl-2-thiouridine(34) in tRNA + selenophosphate + (2E)-geranyl diphosphate + H2O + H(+) = 5-methylaminomethyl-2-selenouridine(34) in tRNA + (2E)-thiogeraniol + phosphate + diphosphate. It carries out the reaction 5-methylaminomethyl-2-thiouridine(34) in tRNA + (2E)-geranyl diphosphate = 5-methylaminomethyl-S-(2E)-geranyl-thiouridine(34) in tRNA + diphosphate. The catalysed reaction is 5-methylaminomethyl-S-(2E)-geranyl-thiouridine(34) in tRNA + selenophosphate + H(+) = 5-methylaminomethyl-2-(Se-phospho)selenouridine(34) in tRNA + (2E)-thiogeraniol. It catalyses the reaction 5-methylaminomethyl-2-(Se-phospho)selenouridine(34) in tRNA + H2O = 5-methylaminomethyl-2-selenouridine(34) in tRNA + phosphate. Involved in the post-transcriptional modification of the uridine at the wobble position (U34) of tRNA(Lys), tRNA(Glu) and tRNA(Gln). Catalyzes the conversion of 2-thiouridine (S2U-RNA) to 2-selenouridine (Se2U-RNA). Acts in a two-step process involving geranylation of 2-thiouridine (S2U) to S-geranyl-2-thiouridine (geS2U) and subsequent selenation of the latter derivative to 2-selenouridine (Se2U) in the tRNA chain. The sequence is that of tRNA 2-selenouridine synthase from Salmonella paratyphi B (strain ATCC BAA-1250 / SPB7).